The following is a 324-amino-acid chain: Deoxyhypusine hydroxylase (324 aa).

HEAT-like PBS-type repeat units lie at residues 60–86 and 94–119; these read LKHE…VLED and RHEA…YLHR. Fe cation contacts are provided by His62, Glu63, His95, and Glu96. The segment covering 143 to 152 has biased composition (basic and acidic residues); the sequence is EERKQEKLRQ. The disordered stretch occupies residues 143 to 171; the sequence is EERKQEKLRQSDFASVDPAPPMPEDDEKQ. HEAT-like PBS-type repeat units lie at residues 189-219, 227-253, and 260-287; these read KRYR…LAKG, FRHE…ALSN, and VRHE…FLHD. Fe cation-binding residues include His229, Glu230, His262, and Glu263.

Belongs to the deoxyhypusine hydroxylase family. Requires Fe(2+) as cofactor.

The protein resides in the cytoplasm. It localises to the nucleus. It catalyses the reaction [eIF5A protein]-deoxyhypusine + AH2 + O2 = [eIF5A protein]-hypusine + A + H2O. It participates in protein modification; eIF5A hypusination. In terms of biological role, catalyzes the hydroxylation of the N(6)-(4-aminobutyl)-L-lysine intermediate to form hypusine, an essential post-translational modification only found in mature eIF-5A factor. The chain is Deoxyhypusine hydroxylase (lia1) from Neurospora crassa (strain ATCC 24698 / 74-OR23-1A / CBS 708.71 / DSM 1257 / FGSC 987).